Reading from the N-terminus, the 81-residue chain is Styelin-D (81 aa).

The first 22 residues, 1 to 22 (MQMKATILIVLVALFMIQQSEA), serve as a signal peptide directing secretion. Trp-24 carries the post-translational modification 6'-bromotryptophan. Position 26 is a 3,4-dihydroxyarginine (Arg-26). Residues Lys-27, Lys-30, and Lys-34 each carry the 4,5-dihydroxylysine modification. Residues Tyr-36 and Tyr-37 each carry the 3',4'-dihydroxyphenylalanine modification. At Lys-38 the chain carries 4,5-dihydroxylysine. Lys-40 bears the 5-hydroxylysine mark. Residues Tyr-41 and Tyr-42 each carry the 3',4'-dihydroxyphenylalanine modification. Lys-44 is subject to 5-hydroxylysine. Leu-54 is subject to Leucine amide. A propeptide spans 56-81 (DMTDEEFQDFMKEVEQAREEELQSRQ) (removed in mature form).

Contains L-DOPA (3',4'-dihydroxyphenylalanine). Hemocytes and pharyngeal tissues.

It is found in the secreted. Bactericidal against several Gram-positive and Gram-negative bacteria. Plays a significant role in the innate immune mechanisms of S.clava. The protein is Styelin-D of Styela clava (Sea squirt).